The following is a 716-amino-acid chain: Phosphoribosylformylglycinamidine synthase subunit PurL (716 aa).

The active site involves His33. Tyr36 provides a ligand contact to ATP. Glu77 provides a ligand contact to Mg(2+). Residues 78–81 and Arg100 contribute to the substrate site; that span reads SHNH. The Proton acceptor role is filled by His79. Asp101 contacts Mg(2+). Position 225 (Gln225) interacts with substrate. Residue Asp253 coordinates Mg(2+). Residue 297–299 participates in substrate binding; that stretch reads ESQ. ATP is bound by residues Asn475 and Gly512. Asn513 serves as a coordination point for Mg(2+). A substrate-binding site is contributed by Ser515.

It belongs to the FGAMS family. In terms of assembly, monomer. Part of the FGAM synthase complex composed of 1 PurL, 1 PurQ and 2 PurS subunits.

The protein localises to the cytoplasm. It catalyses the reaction N(2)-formyl-N(1)-(5-phospho-beta-D-ribosyl)glycinamide + L-glutamine + ATP + H2O = 2-formamido-N(1)-(5-O-phospho-beta-D-ribosyl)acetamidine + L-glutamate + ADP + phosphate + H(+). It functions in the pathway purine metabolism; IMP biosynthesis via de novo pathway; 5-amino-1-(5-phospho-D-ribosyl)imidazole from N(2)-formyl-N(1)-(5-phospho-D-ribosyl)glycinamide: step 1/2. Part of the phosphoribosylformylglycinamidine synthase complex involved in the purines biosynthetic pathway. Catalyzes the ATP-dependent conversion of formylglycinamide ribonucleotide (FGAR) and glutamine to yield formylglycinamidine ribonucleotide (FGAM) and glutamate. The FGAM synthase complex is composed of three subunits. PurQ produces an ammonia molecule by converting glutamine to glutamate. PurL transfers the ammonia molecule to FGAR to form FGAM in an ATP-dependent manner. PurS interacts with PurQ and PurL and is thought to assist in the transfer of the ammonia molecule from PurQ to PurL. The protein is Phosphoribosylformylglycinamidine synthase subunit PurL of Methanosarcina mazei (strain ATCC BAA-159 / DSM 3647 / Goe1 / Go1 / JCM 11833 / OCM 88) (Methanosarcina frisia).